We begin with the raw amino-acid sequence, 474 residues long: Phosphatidylserine synthase 2 (474 aa).

Residues 1-62 (MLRSDVRRVA…DDGTNTFFWR (62 aa)) are Lumenal-facing. The helical transmembrane segment at 63–83 (AHTLTVLFILTCSLGYVTLLE) threads the bilayer. Over 84–96 (ETPQDTAYNAKRG) the chain is Cytoplasmic. Residues 97-117 (IIASILVFLCFGVTQAKDGPF) form a helical membrane-spanning segment. Residues 118–126 (SRPHPAYWR) are Lumenal-facing. Residues 127–147 (FWLCVSVVYELFLIFILFQTV) form a helical membrane-spanning segment. The Cytoplasmic segment spans residues 148-313 (HDGRQFMKFI…EWKPASSLRR (166 aa)). A helical transmembrane segment spans residues 314–334 (WLAVCGIIFVFLLAELNTFYL). Position 335 (K335) is a topological domain, lumenal. A helical transmembrane segment spans residues 336–356 (FVLWMPPEHYLVLLRLVFFVN). At 357–376 (VGGVAMREIYDFMDDLKFHK) the chain is on the cytoplasmic side. A helical membrane pass occupies residues 377–397 (KLGQQAWMVAAITVTEFLIVV). At 398 to 403 (KYDPYT) the chain is on the lumenal side. A helical transmembrane segment spans residues 404–424 (ITLPLPFYVTQCWILGIVLVL). Residues 425–474 (TWTVWRFFIRDITLRYKEIRQQKQHRNEEEKSHRNGDVNSEKDTNKHKKH) lie on the Cytoplasmic side of the membrane. Basic and acidic residues predominate over residues 448 to 468 (QHRNEEEKSHRNGDVNSEKDT). The disordered stretch occupies residues 448-474 (QHRNEEEKSHRNGDVNSEKDTNKHKKH).

This sequence belongs to the phosphatidyl serine synthase family.

It localises to the endoplasmic reticulum membrane. It catalyses the reaction a 1,2-diacyl-sn-glycero-3-phosphoethanolamine + L-serine = a 1,2-diacyl-sn-glycero-3-phospho-L-serine + ethanolamine. The catalysed reaction is 1-hexadecanoyl-2-(9Z-octadecenoyl)-sn-glycero-3-phosphoethanolamine + L-serine = 1-hexadecanoyl-2-(9Z-octadecenoyl)-sn-glycero-3-phospho-L-serine + ethanolamine. The enzyme catalyses 1-hexadecanoyl-2-(4Z,7Z,10Z,13Z,16Z,19Z-docosahexaenoyl)-sn-glycero-3-phosphoethanolamine + L-serine = 1-hexadecanoyl-2-(4Z,7Z,10Z,13Z,16Z,19Z-docosahexaenoyl)-sn-glycero-3-phosphoserine + ethanolamine. It carries out the reaction 1-octadecanoyl-2-(5Z,8Z,11Z,14Z)-eicosatetraenoyl-sn-glycero-3-phosphoethanolamine + L-serine = 1-octadecanoyl-2-(5Z,8Z,11Z,14Z)-eicosatetraenoyl-sn-glycero-3-phosphoserine + ethanolamine. It catalyses the reaction 1-octadecanoyl-2-(4Z,7Z,10Z,13Z,16Z,19Z-docosahexaenoyl)-sn-glycero-3-phosphoethanolamine + L-serine = 1-octadecanoyl-2-(4Z,7Z,10Z,13Z,16Z,19Z-docosahexaenoyl)-sn-glycero-3-phosphoserine + ethanolamine. The catalysed reaction is 1-(1Z-octadecenyl)-2-(4Z,7Z,10Z,13Z,16Z,19Z-docosahexaenoyl)-sn-glycero-3-phosphoethanolamine + L-serine = 1-(1Z-octadecenyl)-2-(4Z,7Z,10Z,13Z,16Z,19Z-docosahexaenoyl)-sn-glycero-3-phospho-L-serine + ethanolamine. The enzyme catalyses 1-octadecanoyl-2-(9Z-octadecenoyl)-sn-glycero-3-phosphoethanolamine + L-serine = 1-octadecanoyl-2-(9Z-octadecenoyl)-sn-glycero-3-phospho-L-serine + ethanolamine. It carries out the reaction 1-(1Z-octadecenyl)-2-(9Z-octadecenoyl)-sn-glycero-3-phosphoethanolamine + L-serine = 1-(1Z-octadecenyl)-2-(9Z-octadecenoyl)-sn-glycero-3-phospho-L-serine + ethanolamine. It catalyses the reaction 1-(1Z-octadecenyl)-2-(5Z,8Z,11Z,14Z- eicosatetraenoyl)-sn-glycero-3-phosphoethanolamine + L-serine = 1-(1Z-octadecenyl)-2-(5Z,8Z,11Z,14Z-eicosatetraenoyl)-sn-glycero-3-phospho-L-serine + ethanolamine. It participates in phospholipid metabolism; phosphatidylserine biosynthesis. In terms of biological role, catalyzes a base-exchange reaction in which the polar head group of phosphatidylethanolamine (PE) or phosphatidylcholine (PC) is replaced by L-serine. Catalyzes the conversion of phosphatatidylethanolamine and does not act on phosphatidylcholine. Can utilize both phosphatidylethanolamine (PE) plasmalogen and diacyl PE as substrate and the latter is six times better utilized, indicating the importance of an ester linkage at the sn-1 position. Although it shows no sn-1 fatty acyl preference, exhibits significant preference towards docosahexaenoic acid (22:6n-3) compared with 18:1 or 20:4 at the sn-2 position. The chain is Phosphatidylserine synthase 2 (ptdss2) from Xenopus tropicalis (Western clawed frog).